A 132-amino-acid polypeptide reads, in one-letter code: Small ribosomal subunit protein uS8 (132 aa).

The protein belongs to the universal ribosomal protein uS8 family. As to quaternary structure, part of the 30S ribosomal subunit. Contacts proteins S5 and S12.

Functionally, one of the primary rRNA binding proteins, it binds directly to 16S rRNA central domain where it helps coordinate assembly of the platform of the 30S subunit. The protein is Small ribosomal subunit protein uS8 of Brucella abortus (strain S19).